The following is a 511-amino-acid chain: cAMP-regulated M3L protein (511 aa).

The protein to D.discoideum protein M3R.

This is cAMP-regulated M3L protein (prtA) from Dictyostelium discoideum (Social amoeba).